The sequence spans 250 residues: MGACRIQYVLLIFLLIASRWTLVQNTYCQVSQTLSLEDDPGRTFNWTSKAEQCNPGELCQETVLLIKADGTRTVVLASKSCVSQGGEAVTFIQYTAPPGLVAISYSNYCNDSLCNNKDSLASVWRVPETTATSNMSGTRHCPTCVALGSCSSAPSMPCANGTTQCYQGRLEFSGGGMDATVQVKGCTTTIGCRLMAMIDSVGPMTVKETCSYQSFLQPRKAEIGASQMPTSLWVLELLFPLLLLPLTHFP.

An N-terminal signal peptide occupies residues 1–25 (MGACRIQYVLLIFLLIASRWTLVQN). N45, N110, N134, and N160 each carry an N-linked (GlcNAc...) asparagine glycan. The UPAR/Ly6 domain maps to 141–215 (CPTCVALGSC…VKETCSYQSF (75 aa)). G224 carries GPI-anchor amidated glycine lipidation. Residues 225–250 (ASQMPTSLWVLELLFPLLLLPLTHFP) constitute a propeptide, removed in mature form.

Interacts with VAMP3. Interacts with LY6K. Interacts with DPEP3; co-localized on the cell surface of spermatocytes, spermatids, and testicular spermatozoa, co-localized only in cytoplasmic droplets of caput and corpus epididymal sperm. Interacts with ADAM3; co-localized on sperm surface. Interacts with ADAM5. In terms of processing, N-glycosylated; by high mannose and/or biantennary complex and/or certain types of hybrid oligosaccharides; possesses different oligosaccharides chains according to its subcellular localization in the testis. Sheds from membrane raft by ACE and released from the cell surface of epididymal sperm while it passes through the caput epididymis leading to disappearance of TEX101 on spermatozoa; is essential to produce fertile spermatozoa. As to expression, detected in testis and ovary. Expressed in spermatocytes, spermatids and testicular spermatozoa, but not in spermatogonia or interstitial cells. Expressed abundantly in testicular germ cells (TGCs) but mostly disappeared from epididymal spermatozoa.

The protein localises to the cell membrane. The protein resides in the membrane raft. It is found in the cytoplasmic vesicle. Its subcellular location is the secretory vesicle. It localises to the acrosome. The protein localises to the secreted. Functionally, plays a role in fertilization by controlling binding of sperm to zona pellucida and migration of spermatozoa into the oviduct probably through molecule adhesion ADAM3. May play a role in signal transduction and promote protein tyrosine phosphorylation. This is Testis-expressed protein 101 from Mus musculus (Mouse).